Here is a 228-residue protein sequence, read N- to C-terminus: uncharacterized protein (228 aa).

Residues 196-228 (VKITELLDKAKISINDLNKTIEKLNETVNKYHG) are a coiled coil.

This is an uncharacterized protein from Acanthamoeba polyphaga (Amoeba).